The chain runs to 246 residues: Ubiquinone biosynthesis O-methyltransferase (246 aa).

4 residues coordinate S-adenosyl-L-methionine: R44, G63, D84, and M128.

The protein belongs to the methyltransferase superfamily. UbiG/COQ3 family.

The catalysed reaction is a 3-demethylubiquinol + S-adenosyl-L-methionine = a ubiquinol + S-adenosyl-L-homocysteine + H(+). The enzyme catalyses a 3-(all-trans-polyprenyl)benzene-1,2-diol + S-adenosyl-L-methionine = a 2-methoxy-6-(all-trans-polyprenyl)phenol + S-adenosyl-L-homocysteine + H(+). The protein operates within cofactor biosynthesis; ubiquinone biosynthesis. O-methyltransferase that catalyzes the 2 O-methylation steps in the ubiquinone biosynthetic pathway. This Xylella fastidiosa (strain 9a5c) protein is Ubiquinone biosynthesis O-methyltransferase.